Reading from the N-terminus, the 502-residue chain is Lysine--tRNA ligase (502 aa).

Mg(2+) is bound by residues Glu-403 and Glu-410.

Belongs to the class-II aminoacyl-tRNA synthetase family. In terms of assembly, homodimer. The cofactor is Mg(2+).

It is found in the cytoplasm. It catalyses the reaction tRNA(Lys) + L-lysine + ATP = L-lysyl-tRNA(Lys) + AMP + diphosphate. The polypeptide is Lysine--tRNA ligase (Parasynechococcus marenigrum (strain WH8102)).